The chain runs to 428 residues: Serine--tRNA ligase (428 aa).

Residue threonine 235–glutamate 237 participates in L-serine binding. Position 266–268 (arginine 266–glutamate 268) interacts with ATP. Glutamate 289 provides a ligand contact to L-serine. Glutamate 353–serine 356 lines the ATP pocket. Serine 389 lines the L-serine pocket.

This sequence belongs to the class-II aminoacyl-tRNA synthetase family. Type-1 seryl-tRNA synthetase subfamily. As to quaternary structure, homodimer. The tRNA molecule binds across the dimer.

It is found in the cytoplasm. It catalyses the reaction tRNA(Ser) + L-serine + ATP = L-seryl-tRNA(Ser) + AMP + diphosphate + H(+). The catalysed reaction is tRNA(Sec) + L-serine + ATP = L-seryl-tRNA(Sec) + AMP + diphosphate + H(+). The protein operates within aminoacyl-tRNA biosynthesis; selenocysteinyl-tRNA(Sec) biosynthesis; L-seryl-tRNA(Sec) from L-serine and tRNA(Sec): step 1/1. In terms of biological role, catalyzes the attachment of serine to tRNA(Ser). Is also able to aminoacylate tRNA(Sec) with serine, to form the misacylated tRNA L-seryl-tRNA(Sec), which will be further converted into selenocysteinyl-tRNA(Sec). This Blochmanniella pennsylvanica (strain BPEN) protein is Serine--tRNA ligase.